A 97-amino-acid chain; its full sequence is Small ribosomal subunit protein bS20 (97 aa).

The segment at 1-22 (MANSKSALKRIRTSERNRLRNK) is disordered.

The protein belongs to the bacterial ribosomal protein bS20 family.

Functionally, binds directly to 16S ribosomal RNA. This Crocosphaera subtropica (strain ATCC 51142 / BH68) (Cyanothece sp. (strain ATCC 51142)) protein is Small ribosomal subunit protein bS20.